We begin with the raw amino-acid sequence, 113 residues long: Large ribosomal subunit protein uL24 (113 aa).

This sequence belongs to the universal ribosomal protein uL24 family. In terms of assembly, part of the 50S ribosomal subunit.

Its function is as follows. One of two assembly initiator proteins, it binds directly to the 5'-end of the 23S rRNA, where it nucleates assembly of the 50S subunit. In terms of biological role, one of the proteins that surrounds the polypeptide exit tunnel on the outside of the subunit. This chain is Large ribosomal subunit protein uL24, found in Rickettsia typhi (strain ATCC VR-144 / Wilmington).